The sequence spans 261 residues: Thiazole synthase (261 aa).

Residue Lys101 is the Schiff-base intermediate with DXP of the active site. 1-deoxy-D-xylulose 5-phosphate is bound by residues Gly162, 188–189 (AG), and 210–211 (NT).

It belongs to the ThiG family. In terms of assembly, homotetramer. Forms heterodimers with either ThiH or ThiS.

It is found in the cytoplasm. The enzyme catalyses [ThiS sulfur-carrier protein]-C-terminal-Gly-aminoethanethioate + 2-iminoacetate + 1-deoxy-D-xylulose 5-phosphate = [ThiS sulfur-carrier protein]-C-terminal Gly-Gly + 2-[(2R,5Z)-2-carboxy-4-methylthiazol-5(2H)-ylidene]ethyl phosphate + 2 H2O + H(+). The protein operates within cofactor biosynthesis; thiamine diphosphate biosynthesis. Functionally, catalyzes the rearrangement of 1-deoxy-D-xylulose 5-phosphate (DXP) to produce the thiazole phosphate moiety of thiamine. Sulfur is provided by the thiocarboxylate moiety of the carrier protein ThiS. In vitro, sulfur can be provided by H(2)S. The chain is Thiazole synthase from Aromatoleum aromaticum (strain DSM 19018 / LMG 30748 / EbN1) (Azoarcus sp. (strain EbN1)).